The following is a 72-amino-acid chain: Mu-like prophage FluMu protein C (72 aa).

Residues asparagine 35 to arginine 55 constitute a DNA-binding region (H-T-H motif).

Belongs to the c/mor transcriptional regulatory family.

Its function is as follows. Required for transcription of the phage late genes. This chain is Mu-like prophage FluMu protein C, found in Haemophilus influenzae (strain ATCC 51907 / DSM 11121 / KW20 / Rd).